Here is a 158-residue protein sequence, read N- to C-terminus: Large ribosomal subunit protein uL16 (158 aa).

Belongs to the universal ribosomal protein uL16 family. In terms of assembly, part of the 50S ribosomal subunit.

Functionally, binds 23S rRNA and is also seen to make contacts with the A and possibly P site tRNAs. The protein is Large ribosomal subunit protein uL16 of Prochlorococcus marinus (strain MIT 9313).